Consider the following 471-residue polypeptide: Probable ribonuclease FAU-1 (471 aa).

This sequence belongs to the FAU-1 family.

In terms of biological role, probable RNase involved in rRNA stability through maturation and/or degradation of precursor rRNAs. Binds to RNA in loop regions with AU-rich sequences. The polypeptide is Probable ribonuclease FAU-1 (Caldivirga maquilingensis (strain ATCC 700844 / DSM 13496 / JCM 10307 / IC-167)).